Here is a 371-residue protein sequence, read N- to C-terminus: tRNA (guanine(26)-N(2))-dimethyltransferase (371 aa).

Residues 4 to 368 enclose the Trm1 methyltransferase domain; the sequence is IEVTEGRTTF…APLDAIAAAL (365 aa). S-adenosyl-L-methionine is bound by residues arginine 41, arginine 66, aspartate 82, aspartate 108, and alanine 109. Positions 237, 240, 256, and 259 each coordinate Zn(2+).

The protein belongs to the class I-like SAM-binding methyltransferase superfamily. Trm1 family.

The catalysed reaction is guanosine(26) in tRNA + 2 S-adenosyl-L-methionine = N(2)-dimethylguanosine(26) in tRNA + 2 S-adenosyl-L-homocysteine + 2 H(+). Its function is as follows. Dimethylates a single guanine residue at position 26 of a number of tRNAs using S-adenosyl-L-methionine as donor of the methyl groups. This is tRNA (guanine(26)-N(2))-dimethyltransferase from Methanosphaerula palustris (strain ATCC BAA-1556 / DSM 19958 / E1-9c).